Reading from the N-terminus, the 138-residue chain is Basic phospholipase A2 BP-II (138 aa).

The N-terminal stretch at 1–16 is a signal peptide; that stretch reads MRTLWIMAVLLVGVDG. Disulfide bonds link C42/C132, C44/C60, C59/C112, C65/C138, C66/C105, C73/C98, and C91/C103. 2 residues coordinate Ca(2+): G45 and G47. H63 is an active-site residue. D106 is an active-site residue.

Belongs to the phospholipase A2 family. Group II subfamily. K49 sub-subfamily. As to quaternary structure, exists as a monomer in both solution and crystal states. In the presence of SDS or probably in the presence of phospholipids, assembles to form SDS-resistant stable oligomers. Ca(2+) is required as a cofactor. As to expression, expressed by the venom gland.

It localises to the secreted. It carries out the reaction a 1,2-diacyl-sn-glycero-3-phosphocholine + H2O = a 1-acyl-sn-glycero-3-phosphocholine + a fatty acid + H(+). Its function is as follows. Snake venom phospholipase A2 (PLA2) that shows anticoagulant activities, strong myolytic activity, infiltration of polymorphonuclear cells, and edema in stromal tissues. Induces cell death of Jurkat cells in a concentration-dependent manner. Shows a low phospholipase A2 activity. PLA2 catalyzes the calcium-dependent hydrolysis of the 2-acyl groups in 3-sn-phosphoglycerides. In Protobothrops flavoviridis (Habu), this protein is Basic phospholipase A2 BP-II.